An 846-amino-acid chain; its full sequence is Disrupted in schizophrenia 1 homolog (846 aa).

5 disordered regions span residues 1–53 (MQGA…IGFL), 127–147 (HSGVHSGNDRRQSERLTGDSG), 231–257 (EAEPLHQSPQEMAAEGSGSDRPHGEPR), 277–312 (TRSNRQPECGMVSSSDAGFSSQDASPAGGRSDQDGG), and 409–436 (LHGAPQRAGSDDPEAPLEGQRRTTAQDS). An interaction with MAP1A region spans residues 1–288 (MQGAGSRGAW…SNRQPECGMV (288 aa)). 2 stretches are compositionally biased toward basic and acidic residues: residues 133 to 143 (GNDRRQSERLT) and 248 to 257 (GSDRPHGEPR). Residues 277-300 (TRSNRQPECGMVSSSDAGFSSQDA) show a composition bias toward polar residues. The tract at residues 289-686 (SSSDAGFSSQ…LERVWKADLE (398 aa)) is interaction with TRAF3IP1. The segment at 429-587 (RRTTAQDSLP…LLEAKMLALS (159 aa)) is required for localization to punctate cytoplasmic foci. The interval 435 to 846 (DSLPGLAVTR…STAGAQEAED (412 aa)) is necessary and sufficient for interaction with PCNT and localization at the centrosome. A coiled-coil region spans residues 440–489 (LAVTRRDWLMREKEQLQKEIEALRARVSVLEAKEQRLSQELEDQEMLLRW). The tract at residues 588-846 (GSCFSTAKEL…STAGAQEAED (259 aa)) is interaction with ATF4 and ATF5. An interaction with NDEL1 and PAFAH1B1 region spans residues 721-846 (TAALAVPRTP…STAGAQEAED (126 aa)). Positions 721 to 846 (TAALAVPRTP…STAGAQEAED (126 aa)) are interaction with PAFAH1B1. The interaction with NDEL1 stretch occupies residues 795–828 (GHDEALFQSLQGELQMVKETLQTMFLQLQPAKEA).

As to quaternary structure, interacts with NDEL1. Interacts with CCDC88A (via C-terminus); the interaction is direct. Interacts with GSK3B. Interacts with tubulin alpha, ACTN2, ANKHD1, ATF4, ATF5, CEP63, EIF3S3, MAP1A, NDEL1, PAFAH1B1, RANBP9, SPTBN4, SYNE1 and TRAF3IP1. Interaction with microtubules may be mediated in part by TRAF3IP1. Interacts (via C-terminal) with PCNT. Interacts with CHCHD6. Interacts with CCDC141. Interacts with FBXW7, the substrate-recognition component of a SCF (SKP1-CUL1-F-box protein) E3 ubiquitin-protein ligase complex; the interaction targets DISC1 for proteasomal degradation. Interacts with ZNF365. Interacts with ATF4; inhibiting ATF4 transcription factor activity by disrupting ATF4 dimerization and DNA-binding. Interacts with PDE4B. Ubiquitinated. Ubiquitination with 'Lys-48'-linked polyubiquitin chains leads to its proteasomal degradation. As to expression, expressed in brain, heart, kidney, liver and thymus. Within the brain expression is high in the cerebral cortex, hippocampus and olfactory bulb and is also seen at lower levels in the cerebellum (at protein level).

It is found in the cytoplasm. The protein localises to the cytoskeleton. It localises to the mitochondrion. The protein resides in the microtubule organizing center. Its subcellular location is the centrosome. It is found in the postsynaptic density. Functionally, involved in the regulation of multiple aspects of embryonic and adult neurogenesis. Required for neural progenitor proliferation in the ventrical/subventrical zone during embryonic brain development and in the adult dentate gyrus of the hippocampus. Participates in the Wnt-mediated neural progenitor proliferation as a positive regulator by modulating GSK3B activity and CTNNB1 abundance. Plays a role as a modulator of the AKT-mTOR signaling pathway controlling the tempo of the process of newborn neurons integration during adult neurogenesis, including neuron positioning, dendritic development and synapse formation. Inhibits the activation of AKT-mTOR signaling upon interaction with CCDC88A. Regulates the migration of early-born granule cell precursors toward the dentate gyrus during the hippocampal development. Inhibits ATF4 transcription factor activity in neurons by disrupting ATF4 dimerization and DNA-binding. Plays a role, together with PCNT, in the microtubule network formation. The sequence is that of Disrupted in schizophrenia 1 homolog from Rattus norvegicus (Rat).